The chain runs to 118 residues: Small ribosomal subunit protein uS13 (118 aa).

The interval 94-118 (SLPLRGQRTKTNARTRKGPRKPIKK) is disordered.

This sequence belongs to the universal ribosomal protein uS13 family. Part of the 30S ribosomal subunit. Forms a loose heterodimer with protein S19. Forms two bridges to the 50S subunit in the 70S ribosome.

Located at the top of the head of the 30S subunit, it contacts several helices of the 16S rRNA. In the 70S ribosome it contacts the 23S rRNA (bridge B1a) and protein L5 of the 50S subunit (bridge B1b), connecting the 2 subunits; these bridges are implicated in subunit movement. Contacts the tRNAs in the A and P-sites. The protein is Small ribosomal subunit protein uS13 of Vibrio parahaemolyticus serotype O3:K6 (strain RIMD 2210633).